The following is a 425-amino-acid chain: Histidine--tRNA ligase (425 aa).

The protein belongs to the class-II aminoacyl-tRNA synthetase family. As to quaternary structure, homodimer.

Its subcellular location is the cytoplasm. The catalysed reaction is tRNA(His) + L-histidine + ATP = L-histidyl-tRNA(His) + AMP + diphosphate + H(+). This Buchnera aphidicola subsp. Baizongia pistaciae (strain Bp) protein is Histidine--tRNA ligase.